The primary structure comprises 482 residues: Variant surface glycoprotein ANTAT 1.1C (482 aa).

The signal sequence occupies residues 1-8 (LHPQQALA). Disulfide bonds link Cys-24-Cys-151 and Cys-133-Cys-188. N-linked (GlcNAc...) asparagine glycosylation occurs at Asn-92. Residues Asn-398 and Asn-411 are each glycosylated (N-linked (GlcNAc...) asparagine). A lipid anchor (GPI-anchor amidated aspartate) is attached at Asp-459. A propeptide spans 460-482 (SSILVTKKFALSLVSAAFASLLF) (removed in mature form).

The protein resides in the cell membrane. VSG forms a coat on the surface of the parasite. The trypanosome evades the immune response of the host by expressing a series of antigenically distinct VSGs from an estimated 1000 VSG genes. In Trypanosoma brucei brucei, this protein is Variant surface glycoprotein ANTAT 1.1C.